A 144-amino-acid polypeptide reads, in one-letter code: Maximins 10/H15 (144 aa).

An N-terminal signal peptide occupies residues 1–18 (MNFKYIVAVSFLIASAYA). A propeptide spanning residues 19–43 (RSVQNDEQSLSQRDVLEEESLREIR) is cleaved from the precursor. Position 70 is a serine amide (S70). The propeptide occupies 74–123 (TAEDHEVMKRLEAVMRDLDSLDYPEEATERETRGFNQEEIANLFTKKEKR). At L143 the chain carries Leucine amide.

Belongs to the bombinin family. In terms of tissue distribution, expressed by the skin glands.

The protein resides in the secreted. Its function is as follows. Maximin-10 shows antimicrobial activity against bacteria and against the fungus C.albicans. It has little hemolytic activity. In terms of biological role, maximin-H15 shows antimicrobial activity against bacteria and against the fungus C.albicans. Shows strong hemolytic activity. This Bombina maxima (Giant fire-bellied toad) protein is Maximins 10/H15.